A 269-amino-acid chain; its full sequence is Tungstate-binding protein TupA (269 aa).

The first 17 residues, 1-17, serve as a signal peptide directing secretion; sequence MKKIISLALALALSASA.

In terms of assembly, the complex is composed of two ATP-binding proteins (TupC), two transmembrane proteins (TupB) and a solute-binding protein (TupA).

It localises to the periplasm. Its function is as follows. Part of an ABC transporter complex involved in ultra-high affinity tungstate uptake. Specifically binds tungstate. The chain is Tungstate-binding protein TupA from Campylobacter jejuni subsp. jejuni serotype O:2 (strain ATCC 700819 / NCTC 11168).